Reading from the N-terminus, the 602-residue chain is Elongation factor 4 (602 aa).

Positions 8–190 (DLIRNFSIVA…AIVHRLPPPK (183 aa)) constitute a tr-type G domain. GTP-binding positions include 20-25 (DHGKST) and 137-140 (NKID).

Belongs to the TRAFAC class translation factor GTPase superfamily. Classic translation factor GTPase family. LepA subfamily.

Its subcellular location is the cell inner membrane. It catalyses the reaction GTP + H2O = GDP + phosphate + H(+). In terms of biological role, required for accurate and efficient protein synthesis under certain stress conditions. May act as a fidelity factor of the translation reaction, by catalyzing a one-codon backward translocation of tRNAs on improperly translocated ribosomes. Back-translocation proceeds from a post-translocation (POST) complex to a pre-translocation (PRE) complex, thus giving elongation factor G a second chance to translocate the tRNAs correctly. Binds to ribosomes in a GTP-dependent manner. This chain is Elongation factor 4, found in Cereibacter sphaeroides (strain ATCC 17029 / ATH 2.4.9) (Rhodobacter sphaeroides).